Reading from the N-terminus, the 529-residue chain is Phospholipase A1-Igamma2, chloroplastic (529 aa).

The N-terminal 43 residues, 1-43 (MAAIPSHNNLLTINHKNSITGSSSLNTNFSEINFPAKFRVATR), are a transit peptide targeting the chloroplast. Positions 316 to 320 (GHSLG) match the GXSXG motif. Ser-318 acts as the Acyl-ester intermediate in catalysis. Catalysis depends on charge relay system residues Asp-381 and His-437.

It belongs to the AB hydrolase superfamily. Lipase family. As to quaternary structure, interacts with SBP1. In terms of tissue distribution, widely expressed. Highly expressed in leaves and stems.

The protein resides in the plastid. It is found in the chloroplast. It carries out the reaction 1,2-dihexadecanoyl-sn-glycero-3-phosphocholine + H2O = 2-hexadecanoyl-sn-glycero-3-phosphocholine + hexadecanoate + H(+). It catalyses the reaction a 1,2-diacyl-3-O-(beta-D-galactosyl)-sn-glycerol + H2O = an acyl-3-O-(beta-D-galactosyl)-sn-glycerol + a fatty acid + H(+). The catalysed reaction is a 1,2-diacyl-3-O-[alpha-D-galactosyl-(1-&gt;6)-beta-D-galactosyl]-sn-glycerol + H2O = acyl-3-O-[alpha-D-galactosyl-(1-&gt;6)-beta-D-galactosyl]-sn-glycerol + a fatty acid + H(+). The enzyme catalyses a triacylglycerol + H2O = a diacylglycerol + a fatty acid + H(+). Its function is as follows. Acylhydrolase with broad specificity. Catalyzes the hydrolysis of phosphatidylcholine at the sn-1 position. Possesses moderate activity toward phosphatidylcholine (PC), monogalactosyldiacylglycerol (MGDG), digalactosyldiacylglycerol (DGDG) and triacylglycerol (TAG). This Arabidopsis thaliana (Mouse-ear cress) protein is Phospholipase A1-Igamma2, chloroplastic.